The chain runs to 418 residues: Dwarfin sma-2 (418 aa).

Positions 8 to 134 constitute an MH1 domain; it reads KKITERLKWK…YKRVHATGVL (127 aa). Zn(2+)-binding residues include Cys-62, Cys-107, Cys-119, and His-124. The MH2 domain maps to 222 to 418; sequence WATVSYYELN…PTPRPISSIS (197 aa).

It belongs to the dwarfin/SMAD family.

It localises to the cytoplasm. The protein resides in the nucleus. In terms of biological role, involved in TGF-beta pathway. Plays a role in male tail tip morphogenesis. The protein is Dwarfin sma-2 of Caenorhabditis elegans.